Here is a 577-residue protein sequence, read N- to C-terminus: Anthranilate synthase alpha subunit 1, chloroplastic (577 aa).

Residues methionine 1–arginine 34 constitute a chloroplast transit peptide.

This sequence belongs to the anthranilate synthase component I family. Heterotetramer consisting of two non-identical subunits: a beta subunit and a large alpha subunit.

The protein resides in the plastid. Its subcellular location is the chloroplast. It carries out the reaction chorismate + L-glutamine = anthranilate + pyruvate + L-glutamate + H(+). The protein operates within amino-acid biosynthesis; L-tryptophan biosynthesis; L-tryptophan from chorismate: step 1/5. With respect to regulation, feedback inhibition by tryptophan. Functionally, part of a heterotetrameric complex that catalyzes the two-step biosynthesis of anthranilate, an intermediate in the biosynthesis of L-tryptophan. In the first step, the glutamine-binding beta subunit of anthranilate synthase (AS) provides the glutamine amidotransferase activity which generates ammonia as a substrate that, along with chorismate, is used in the second step, catalyzed by the large alpha subunit of AS to produce anthranilate. This is Anthranilate synthase alpha subunit 1, chloroplastic (ASA1) from Oryza sativa subsp. indica (Rice).